Consider the following 261-residue polypeptide: uncharacterized protein (261 aa).

This is an uncharacterized protein from Haemophilus influenzae (strain ATCC 51907 / DSM 11121 / KW20 / Rd).